Reading from the N-terminus, the 29-residue chain is Glucagon (29 aa).

Belongs to the glucagon family.

It localises to the secreted. Functionally, glucagon plays a key role in glucose metabolism and homeostasis. Regulates blood glucose by increasing gluconeogenesis and decreasing glycolysis. This Lampetra fluviatilis (European river lamprey) protein is Glucagon (gcg).